Reading from the N-terminus, the 192-residue chain is Fe/S biogenesis protein NfuA (192 aa).

Cysteine 149 and cysteine 152 together coordinate [4Fe-4S] cluster.

This sequence belongs to the NfuA family. As to quaternary structure, homodimer. The cofactor is [4Fe-4S] cluster.

In terms of biological role, involved in iron-sulfur cluster biogenesis. Binds a 4Fe-4S cluster, can transfer this cluster to apoproteins, and thereby intervenes in the maturation of Fe/S proteins. Could also act as a scaffold/chaperone for damaged Fe/S proteins. The sequence is that of Fe/S biogenesis protein NfuA from Pseudoalteromonas atlantica (strain T6c / ATCC BAA-1087).